A 68-amino-acid polypeptide reads, in one-letter code: Protein VNG_1110C (68 aa).

The polypeptide is Protein VNG_1110C (Halobacterium salinarum (strain ATCC 700922 / JCM 11081 / NRC-1) (Halobacterium halobium)).